Consider the following 297-residue polypeptide: 4-hydroxy-tetrahydrodipicolinate synthase (297 aa).

T46 contacts pyruvate. Residue Y134 is the Proton donor/acceptor of the active site. Residue K162 is the Schiff-base intermediate with substrate of the active site. I204 contacts pyruvate.

The protein belongs to the DapA family. Homotetramer; dimer of dimers.

It is found in the cytoplasm. It catalyses the reaction L-aspartate 4-semialdehyde + pyruvate = (2S,4S)-4-hydroxy-2,3,4,5-tetrahydrodipicolinate + H2O + H(+). Its pathway is amino-acid biosynthesis; L-lysine biosynthesis via DAP pathway; (S)-tetrahydrodipicolinate from L-aspartate: step 3/4. In terms of biological role, catalyzes the condensation of (S)-aspartate-beta-semialdehyde [(S)-ASA] and pyruvate to 4-hydroxy-tetrahydrodipicolinate (HTPA). The polypeptide is 4-hydroxy-tetrahydrodipicolinate synthase (Stenotrophomonas maltophilia (strain K279a)).